Reading from the N-terminus, the 190-residue chain is GTP cyclohydrolase 1 (190 aa).

Residues cysteine 75, histidine 78, and cysteine 146 each coordinate Zn(2+).

It belongs to the GTP cyclohydrolase I family. In terms of assembly, toroid-shaped homodecamer, composed of two pentamers of five dimers.

It catalyses the reaction GTP + H2O = 7,8-dihydroneopterin 3'-triphosphate + formate + H(+). The protein operates within cofactor biosynthesis; 7,8-dihydroneopterin triphosphate biosynthesis; 7,8-dihydroneopterin triphosphate from GTP: step 1/1. The protein is GTP cyclohydrolase 1 of Campylobacter curvus (strain 525.92).